The sequence spans 333 residues: Ribosomal RNA small subunit methyltransferase C (333 aa).

This sequence belongs to the methyltransferase superfamily. RsmC family. In terms of assembly, monomer.

The protein resides in the cytoplasm. The enzyme catalyses guanosine(1207) in 16S rRNA + S-adenosyl-L-methionine = N(2)-methylguanosine(1207) in 16S rRNA + S-adenosyl-L-homocysteine + H(+). Functionally, specifically methylates the guanine in position 1207 of 16S rRNA in the 30S particle. The chain is Ribosomal RNA small subunit methyltransferase C from Chromohalobacter salexigens (strain ATCC BAA-138 / DSM 3043 / CIP 106854 / NCIMB 13768 / 1H11).